The sequence spans 538 residues: Sterol esterase 2 (538 aa).

Topologically, residues 1–11 (MVNKVVDEVQR) are cytoplasmic. A helical; Signal-anchor for type II membrane protein membrane pass occupies residues 12–32 (LVSAIILTSFMTGLFILSLWK). The Lumenal segment spans residues 33-538 (NYVTVHFQHK…IENLRFPNAR (506 aa)). The tract at residues 42–87 (KNDPRDTRSSRTKIQPNDKKKKRPARHSRPLSISSTTPLDLQRDQE) is disordered. The segment covering 60-70 (KKKKRPARHSR) has biased composition (basic residues). 2 positions are modified to phosphoserine: S73 and S107. S287 (nucleophile) is an active-site residue. Active-site charge relay system residues include D480 and H511.

The protein belongs to the AB hydrolase superfamily. Post-translationally, not glycosylated.

It is found in the cell membrane. It carries out the reaction a sterol ester + H2O = a sterol + a fatty acid + H(+). Mediates the hydrolysis of steryl esters. Required for mobilization of steryl ester, thereby playing a central role in lipid metabolism. This Saccharomyces cerevisiae (strain ATCC 204508 / S288c) (Baker's yeast) protein is Sterol esterase 2 (YEH2).